The sequence spans 1055 residues: Kinesin-like protein KIN-7D, mitochondrial (1055 aa).

Residues methionine 1–serine 23 are compositionally biased toward low complexity. Positions methionine 1–threonine 36 are disordered. A mitochondrion-targeting transit peptide spans methionine 1–arginine 96. One can recognise a Kinesin motor domain in the interval serine 98–isoleucine 415. Glycine 178–threonine 185 serves as a coordination point for ATP. Coiled-coil stretches lie at residues alanine 419 to serine 503, proline 618 to serine 653, and leucine 694 to threonine 823. The tract at residues proline 826 to phenylalanine 856 is disordered. Residues leucine 880–aspartate 911 adopt a coiled-coil conformation. Positions asparagine 926–glutamate 963 are disordered. Positions proline 937–glutamine 954 are enriched in basic and acidic residues. The RING-type zinc finger occupies cysteine 1008–arginine 1043.

This sequence belongs to the TRAFAC class myosin-kinesin ATPase superfamily. Kinesin family. KIN-7 subfamily.

It is found in the mitochondrion. This chain is Kinesin-like protein KIN-7D, mitochondrial, found in Arabidopsis thaliana (Mouse-ear cress).